A 412-amino-acid chain; its full sequence is Membrane fusion protein MtrC (412 aa).

Positions 1–24 (MAFYASKAMRAAALAAAVALALSS) are cleaved as a signal peptide. The N-palmitoyl cysteine moiety is linked to residue C25. A lipid anchor (S-diacylglycerol cysteine) is attached at C25. The interval 377-412 (AKKVTPKEWAPSENQAAAPQAGVQTASEAKPASEAK) is disordered. The segment covering 388 to 403 (SENQAAAPQAGVQTAS) has biased composition (polar residues).

Belongs to the membrane fusion protein (MFP) (TC 8.A.1) family.

It localises to the cell inner membrane. Its function is as follows. Cell membrane lipoprotein, involved in cell membrane permeability to hydrophobic compounds such as antibiotics, dyes and detergents. In Neisseria gonorrhoeae, this protein is Membrane fusion protein MtrC (mtrC).